The sequence spans 97 residues: Aspartyl/glutamyl-tRNA(Asn/Gln) amidotransferase subunit C (97 aa).

Belongs to the GatC family. Heterotrimer of A, B and C subunits.

It carries out the reaction L-glutamyl-tRNA(Gln) + L-glutamine + ATP + H2O = L-glutaminyl-tRNA(Gln) + L-glutamate + ADP + phosphate + H(+). The enzyme catalyses L-aspartyl-tRNA(Asn) + L-glutamine + ATP + H2O = L-asparaginyl-tRNA(Asn) + L-glutamate + ADP + phosphate + 2 H(+). Functionally, allows the formation of correctly charged Asn-tRNA(Asn) or Gln-tRNA(Gln) through the transamidation of misacylated Asp-tRNA(Asn) or Glu-tRNA(Gln) in organisms which lack either or both of asparaginyl-tRNA or glutaminyl-tRNA synthetases. The reaction takes place in the presence of glutamine and ATP through an activated phospho-Asp-tRNA(Asn) or phospho-Glu-tRNA(Gln). The sequence is that of Aspartyl/glutamyl-tRNA(Asn/Gln) amidotransferase subunit C from Listeria monocytogenes serotype 4b (strain CLIP80459).